A 235-amino-acid polypeptide reads, in one-letter code: MLLTNAYEIAQYIKDAKKETPVKLYVNGQLAGLEIEEAKAFGTDESKLFLTTAERAAAFLEANASVITDSHLEYDRRNSAVPMLDTTRLNARIEPGSFIRDHVQIGNNAVVMMGAVVNIGAVIGDGSMVDMNAVIGARGTLGKNVHLGAGAVVAGVLEPPSKDPVIIEDGVMIGANAVILEGVRVGENAVVAAGSVVTQDVPPGVVVAGTPARIIKQKDEKTSEKTQLVDDLRSL.

Belongs to the transferase hexapeptide repeat family. DapH subfamily.

The catalysed reaction is (S)-2,3,4,5-tetrahydrodipicolinate + acetyl-CoA + H2O = L-2-acetamido-6-oxoheptanedioate + CoA. Its pathway is amino-acid biosynthesis; L-lysine biosynthesis via DAP pathway; LL-2,6-diaminopimelate from (S)-tetrahydrodipicolinate (acetylase route): step 1/3. In terms of biological role, catalyzes the transfer of an acetyl group from acetyl-CoA to tetrahydrodipicolinate. The protein is 2,3,4,5-tetrahydropyridine-2,6-dicarboxylate N-acetyltransferase of Exiguobacterium sp. (strain ATCC BAA-1283 / AT1b).